The sequence spans 506 residues: Nucleosome assembly protein 1-like 3 (506 aa).

2 disordered regions span residues 1–95 and 157–307; these read MAEA…LGTN and PTEE…KRED. Positions 35–70 are enriched in low complexity; sequence SSSSSSSTSDSSSSSSTSGSSSGSGSSSSSSGSTSS. Residues 157–178 are compositionally biased toward acidic residues; the sequence is PTEEECEWNSEDEEFSSDEEVQ. The span at 196-296 shows a compositional bias: basic and acidic residues; it reads PKENPEVKAE…ERLQDSVDLK (101 aa).

This sequence belongs to the nucleosome assembly protein (NAP) family.

The protein resides in the nucleus. In Homo sapiens (Human), this protein is Nucleosome assembly protein 1-like 3 (NAP1L3).